The sequence spans 726 residues: Catalase-peroxidase (726 aa).

A cross-link (tryptophyl-tyrosyl-methioninium (Trp-Tyr) (with M-239)) is located at residues 90 to 213 (WHAAGTYRIG…LAAVQMGLIY (124 aa)). His-91 acts as the Proton acceptor in catalysis. Positions 213-239 (YVNPEGPNGNPDPLAAARDIRETFARM) form a cross-link, tryptophyl-tyrosyl-methioninium (Tyr-Met) (with W-90). His-254 lines the heme b pocket. A disordered region spans residues 334–359 (AHQWKPKHGAGANTVPDAHDPSKRHA).

This sequence belongs to the peroxidase family. Peroxidase/catalase subfamily. In terms of assembly, homodimer or homotetramer. It depends on heme b as a cofactor. In terms of processing, formation of the three residue Trp-Tyr-Met cross-link is important for the catalase, but not the peroxidase activity of the enzyme.

The catalysed reaction is H2O2 + AH2 = A + 2 H2O. The enzyme catalyses 2 H2O2 = O2 + 2 H2O. Functionally, bifunctional enzyme with both catalase and broad-spectrum peroxidase activity. This chain is Catalase-peroxidase, found in Bradyrhizobium sp. (strain BTAi1 / ATCC BAA-1182).